Here is a 550-residue protein sequence, read N- to C-terminus: Carboxypeptidase Y homolog A (550 aa).

The signal sequence occupies residues Met1 to Pro18. Residues Leu19–Arg131 constitute a propeptide that is removed on maturation. 5 disulfides stabilise this stretch: Cys185-Cys424, Cys319-Cys333, Cys343-Cys366, Cys350-Cys359, and Cys388-Cys394. Asn216 carries an N-linked (GlcNAc...) asparagine glycan. Ser272 is an active-site residue. Asp463 is a catalytic residue. N-linked (GlcNAc...) asparagine glycans are attached at residues Asn493 and Asn514. Residue His525 is part of the active site.

The protein belongs to the peptidase S10 family.

The protein localises to the vacuole. The enzyme catalyses Release of a C-terminal amino acid with broad specificity.. In terms of biological role, vacuolar carboxypeptidase involved in degradation of small peptides. Digests preferentially peptides containing an aliphatic or hydrophobic residue in P1' position, as well as methionine, leucine or phenylalanine in P1 position of ester substrate. In Paracoccidioides lutzii (strain ATCC MYA-826 / Pb01) (Paracoccidioides brasiliensis), this protein is Carboxypeptidase Y homolog A (CPYA).